The following is a 642-amino-acid chain: Threonine--tRNA ligase (642 aa).

In terms of domain architecture, TGS spans Met-1 to Thr-61. The interval Asp-243–Pro-534 is catalytic. Lys-286 carries the post-translational modification N6-acetyllysine. 3 residues coordinate Zn(2+): Cys-334, His-385, and His-511.

The protein belongs to the class-II aminoacyl-tRNA synthetase family. Homodimer. Zn(2+) is required as a cofactor.

Its subcellular location is the cytoplasm. It catalyses the reaction tRNA(Thr) + L-threonine + ATP = L-threonyl-tRNA(Thr) + AMP + diphosphate + H(+). Its function is as follows. Catalyzes the attachment of threonine to tRNA(Thr) in a two-step reaction: L-threonine is first activated by ATP to form Thr-AMP and then transferred to the acceptor end of tRNA(Thr). Also edits incorrectly charged L-seryl-tRNA(Thr). The polypeptide is Threonine--tRNA ligase (Escherichia coli O157:H7).